Here is a 203-residue protein sequence, read N- to C-terminus: Outer-membrane lipoprotein LolB (203 aa).

An N-terminal signal peptide occupies residues 1–16 (MKTFLPCLFFLLILVG). A lipid anchor (N-palmitoyl cysteine) is attached at Cys-17. Cys-17 carries the S-diacylglycerol cysteine lipid modification.

The protein belongs to the LolB family. In terms of assembly, monomer.

The protein resides in the cell outer membrane. Plays a critical role in the incorporation of lipoproteins in the outer membrane after they are released by the LolA protein. In Psychromonas ingrahamii (strain DSM 17664 / CCUG 51855 / 37), this protein is Outer-membrane lipoprotein LolB.